We begin with the raw amino-acid sequence, 652 residues long: DNA ligase (652 aa).

Residues 29–33 (DSEYD), 78–79 (SL), and E107 each bind NAD(+). The active-site N6-AMP-lysine intermediate is the K109. Positions 130, 164, 278, and 302 each coordinate NAD(+). C395, C398, C413, and C418 together coordinate Zn(2+). In terms of domain architecture, BRCT spans 577–652 (DRQAELFGLT…IEDEDWLLNL (76 aa)).

This sequence belongs to the NAD-dependent DNA ligase family. LigA subfamily. Requires Mg(2+) as cofactor. Mn(2+) serves as cofactor.

The enzyme catalyses NAD(+) + (deoxyribonucleotide)n-3'-hydroxyl + 5'-phospho-(deoxyribonucleotide)m = (deoxyribonucleotide)n+m + AMP + beta-nicotinamide D-nucleotide.. In terms of biological role, DNA ligase that catalyzes the formation of phosphodiester linkages between 5'-phosphoryl and 3'-hydroxyl groups in double-stranded DNA using NAD as a coenzyme and as the energy source for the reaction. It is essential for DNA replication and repair of damaged DNA. This is DNA ligase from Streptococcus equi subsp. zooepidemicus (strain MGCS10565).